The sequence spans 317 residues: tRNA(Ile)-lysidine synthase (317 aa).

S30–S35 is a binding site for ATP.

The protein belongs to the tRNA(Ile)-lysidine synthase family.

It is found in the cytoplasm. The enzyme catalyses cytidine(34) in tRNA(Ile2) + L-lysine + ATP = lysidine(34) in tRNA(Ile2) + AMP + diphosphate + H(+). Its function is as follows. Ligates lysine onto the cytidine present at position 34 of the AUA codon-specific tRNA(Ile) that contains the anticodon CAU, in an ATP-dependent manner. Cytidine is converted to lysidine, thus changing the amino acid specificity of the tRNA from methionine to isoleucine. This is tRNA(Ile)-lysidine synthase from Chlamydia abortus (strain DSM 27085 / S26/3) (Chlamydophila abortus).